A 290-amino-acid chain; its full sequence is MFLNSILVVITDLAAGLLGNTSFRRHFHLLLSALLLFGPLLSLWVSHYSVFAKRTHFLYRVFLRSGWGWTCIFVGSFVFVLSFSVRRSLTLSLRHLSRLAVAGGLWLGFRKLLCLLENATGSCYEPLSAALEMTSGTNGEGQPLLLLREAETKETCVRSGMLWRGYEVSEDALLLCLCCLLLAEETAVFGPYLNLGGPSEAPLRILFLFCVLLLSLWVFLLLCLLAYFPEFPTQLLGGALGCLSWRALYQGWYRLRPSWYCPGRPGVGLLSTQSKQDELLETQTNAKEID.

A run of 5 helical transmembrane segments spans residues 1 to 21, 26 to 46, 65 to 85, 173 to 193, and 205 to 225; these read MFLN…LGNT, HFHL…LWVS, SGWG…SFSV, LLLC…GPYL, and ILFL…LCLL.

Belongs to the FIT family. FIT1 subfamily.

It is found in the endoplasmic reticulum membrane. Functionally, may play an important role in the formation of lipid droplets (LDs) which are storage organelles at the center of lipid and energy homeostasis. May directly bind to diacylglycerol (DAGs) and triacylglycerol. The polypeptide is Fat storage-inducing transmembrane protein 1 (fitm1l) (Danio rerio (Zebrafish)).